We begin with the raw amino-acid sequence, 169 residues long: ATP synthase subunit b (169 aa).

Residues 12 to 32 (HIYLGNALWYLICFAILLLLI) form a helical membrane-spanning segment.

Belongs to the ATPase B chain family. F-type ATPases have 2 components, F(1) - the catalytic core - and F(0) - the membrane proton channel. F(1) has five subunits: alpha(3), beta(3), gamma(1), delta(1), epsilon(1). F(0) has three main subunits: a(1), b(2) and c(10-14). The alpha and beta chains form an alternating ring which encloses part of the gamma chain. F(1) is attached to F(0) by a central stalk formed by the gamma and epsilon chains, while a peripheral stalk is formed by the delta and b chains.

It localises to the cell membrane. Its function is as follows. F(1)F(0) ATP synthase produces ATP from ADP in the presence of a proton or sodium gradient. F-type ATPases consist of two structural domains, F(1) containing the extramembraneous catalytic core and F(0) containing the membrane proton channel, linked together by a central stalk and a peripheral stalk. During catalysis, ATP synthesis in the catalytic domain of F(1) is coupled via a rotary mechanism of the central stalk subunits to proton translocation. In terms of biological role, component of the F(0) channel, it forms part of the peripheral stalk, linking F(1) to F(0). The polypeptide is ATP synthase subunit b (Lactobacillus helveticus (strain DPC 4571)).